An 874-amino-acid polypeptide reads, in one-letter code: Alanine--tRNA ligase (874 aa).

Zn(2+)-binding residues include histidine 562, histidine 566, cysteine 664, and histidine 668.

It belongs to the class-II aminoacyl-tRNA synthetase family. Requires Zn(2+) as cofactor.

The protein localises to the cytoplasm. The enzyme catalyses tRNA(Ala) + L-alanine + ATP = L-alanyl-tRNA(Ala) + AMP + diphosphate. Catalyzes the attachment of alanine to tRNA(Ala) in a two-step reaction: alanine is first activated by ATP to form Ala-AMP and then transferred to the acceptor end of tRNA(Ala). Also edits incorrectly charged Ser-tRNA(Ala) and Gly-tRNA(Ala) via its editing domain. This chain is Alanine--tRNA ligase, found in Shewanella loihica (strain ATCC BAA-1088 / PV-4).